The chain runs to 245 residues: Thiopurine S-methyltransferase (245 aa).

Residue Ser-14 is modified to Phosphoserine. 29–40 (WQDKWVNGKTAF) serves as a coordination point for S-adenosyl-L-methionine. Phe-40 lines the substrate pocket. The residue at position 58 (Lys-58) is an N6-acetyllysine. S-adenosyl-L-methionine-binding positions include Leu-69, Glu-90, 134-135 (SI), and Arg-152.

It belongs to the class I-like SAM-binding methyltransferase superfamily. TPMT family. In terms of assembly, monomer.

It localises to the cytoplasm. It catalyses the reaction S-adenosyl-L-methionine + a thiopurine = S-adenosyl-L-homocysteine + a thiopurine S-methylether.. The enzyme catalyses mercaptopurine + S-adenosyl-L-methionine = 6-methylthiopurine + S-adenosyl-L-homocysteine + H(+). It carries out the reaction 6-thioguanine + S-adenosyl-L-methionine = 6-methylthioguanine + S-adenosyl-L-homocysteine + H(+). Inhibited by S-adenosyl-L-homocysteine (SAH). Functionally, catalyzes the S-methylation of thiopurine drugs such as 6-mercaptopurine (also called mercaptopurine, 6-MP or its brand name Purinethol) and 6-thioguanine (also called tioguanine or 6-TG) using S-adenosyl-L-methionine as the methyl donor. TPMT activity modulates the cytotoxic effects of thiopurine prodrugs. A natural substrate for this enzyme has yet to be identified. The chain is Thiopurine S-methyltransferase (TPMT) from Homo sapiens (Human).